Consider the following 645-residue polypeptide: DNA ligase (645 aa).

NAD(+)-binding positions include 30 to 34 (DIEYD), 79 to 80 (SM), and glutamate 106. Catalysis depends on lysine 108, which acts as the N6-AMP-lysine intermediate. NAD(+)-binding residues include arginine 129, glutamate 163, and lysine 302. Residues cysteine 396, cysteine 399, cysteine 412, and cysteine 417 each contribute to the Zn(2+) site. The BRCT domain maps to 570 to 645 (ISQNVFTKKT…ISEDEFKEML (76 aa)).

This sequence belongs to the NAD-dependent DNA ligase family. LigA subfamily. It depends on Mg(2+) as a cofactor. Mn(2+) is required as a cofactor.

It catalyses the reaction NAD(+) + (deoxyribonucleotide)n-3'-hydroxyl + 5'-phospho-(deoxyribonucleotide)m = (deoxyribonucleotide)n+m + AMP + beta-nicotinamide D-nucleotide.. In terms of biological role, DNA ligase that catalyzes the formation of phosphodiester linkages between 5'-phosphoryl and 3'-hydroxyl groups in double-stranded DNA using NAD as a coenzyme and as the energy source for the reaction. It is essential for DNA replication and repair of damaged DNA. The protein is DNA ligase of Campylobacter hominis (strain ATCC BAA-381 / DSM 21671 / CCUG 45161 / LMG 19568 / NCTC 13146 / CH001A).